The chain runs to 597 residues: tRNA uridine 5-carboxymethylaminomethyl modification enzyme MnmG (597 aa).

10-15 contributes to the FAD binding site; that stretch reads GGGHAG. 267 to 281 contacts NAD(+); it reads GPRYCPSIEDKVVRF.

The protein belongs to the MnmG family. In terms of assembly, homodimer. Heterotetramer of two MnmE and two MnmG subunits. It depends on FAD as a cofactor.

It localises to the cytoplasm. Functionally, NAD-binding protein involved in the addition of a carboxymethylaminomethyl (cmnm) group at the wobble position (U34) of certain tRNAs, forming tRNA-cmnm(5)s(2)U34. The polypeptide is tRNA uridine 5-carboxymethylaminomethyl modification enzyme MnmG (Thermus thermophilus (strain ATCC 27634 / DSM 579 / HB8)).